The sequence spans 187 residues: Adenylate kinase 1 (187 aa).

14–19 (GSGKGT) is an ATP binding site. An NMP region spans residues 34–63 (STGDMLRQAIADGTELGNQAKGYMDKGELV). AMP contacts are provided by residues Thr-35, Arg-40, 61-63 (ELV), 89-92 (GFPR), and Gln-96. An LID region spans residues 130-136 (ARGRADD). Residue Arg-131 participates in ATP binding. Arg-133 and Arg-144 together coordinate AMP. Gln-172 contacts ATP.

The protein belongs to the adenylate kinase family. In terms of assembly, monomer.

The protein resides in the cytoplasm. The catalysed reaction is AMP + ATP = 2 ADP. It functions in the pathway purine metabolism; AMP biosynthesis via salvage pathway; AMP from ADP: step 1/1. Catalyzes the reversible transfer of the terminal phosphate group between ATP and AMP. Plays an important role in cellular energy homeostasis and in adenine nucleotide metabolism. This chain is Adenylate kinase 1, found in Synechocystis sp. (strain ATCC 27184 / PCC 6803 / Kazusa).